A 289-amino-acid polypeptide reads, in one-letter code: ATP synthase gamma chain (289 aa).

It belongs to the ATPase gamma chain family. As to quaternary structure, F-type ATPases have 2 components, CF(1) - the catalytic core - and CF(0) - the membrane proton channel. CF(1) has five subunits: alpha(3), beta(3), gamma(1), delta(1), epsilon(1). CF(0) has three main subunits: a, b and c.

The protein resides in the cell inner membrane. Functionally, produces ATP from ADP in the presence of a proton gradient across the membrane. The gamma chain is believed to be important in regulating ATPase activity and the flow of protons through the CF(0) complex. The polypeptide is ATP synthase gamma chain (Anaeromyxobacter dehalogenans (strain 2CP-C)).